The primary structure comprises 238 residues: 7-cyano-7-deazaguanine synthase (238 aa).

Phe-12–Leu-22 serves as a coordination point for ATP. Cys-191, Cys-200, Cys-203, and Cys-206 together coordinate Zn(2+).

This sequence belongs to the QueC family. Zn(2+) is required as a cofactor.

It catalyses the reaction 7-carboxy-7-deazaguanine + NH4(+) + ATP = 7-cyano-7-deazaguanine + ADP + phosphate + H2O + H(+). Its pathway is purine metabolism; 7-cyano-7-deazaguanine biosynthesis. Catalyzes the ATP-dependent conversion of 7-carboxy-7-deazaguanine (CDG) to 7-cyano-7-deazaguanine (preQ(0)). The chain is 7-cyano-7-deazaguanine synthase from Shewanella oneidensis (strain ATCC 700550 / JCM 31522 / CIP 106686 / LMG 19005 / NCIMB 14063 / MR-1).